The primary structure comprises 124 residues: ATP synthase epsilon chain (124 aa).

Belongs to the ATPase epsilon chain family. In terms of assembly, F-type ATPases have 2 components, CF(1) - the catalytic core - and CF(0) - the membrane proton channel. CF(1) has five subunits: alpha(3), beta(3), gamma(1), delta(1), epsilon(1). CF(0) has three main subunits: a, b and c.

Its subcellular location is the cell membrane. Functionally, produces ATP from ADP in the presence of a proton gradient across the membrane. This Corynebacterium efficiens (strain DSM 44549 / YS-314 / AJ 12310 / JCM 11189 / NBRC 100395) protein is ATP synthase epsilon chain.